The primary structure comprises 56 residues: TauPI-stichotoxin-Hcr2d (56 aa).

The region spanning 4–54 (CLEPKVVGPCTAYFPRFYFNSETGKCTPFIYGGCEGNGNNFETLRACRGIC) is the BPTI/Kunitz inhibitor domain. 3 cysteine pairs are disulfide-bonded: Cys4-Cys54, Cys13-Cys37, and Cys29-Cys50.

The protein belongs to the venom Kunitz-type family. Sea anemone type 2 potassium channel toxin subfamily.

It localises to the secreted. The protein localises to the nematocyst. In terms of biological role, this protease inhibitor shows two different activities, it inhibits both the capsaicin receptor TRPV1 and serine proteases. It partially blocks the capsaicin- and acid-induced response of TRPV1, a receptor of the pain pathway. It also weakly inhibits trypsin and chymotrypsin activity (Ki=0.5 uM and Ki=7 uM, respectively). In addition, it may also alter tachykinin levels by suppressing endogenous proteases. In vivo, it shows antinociceptive and analgesic activities. It significantly prolongs paw withdrawal latency and blocks heat-induced and chemical-induced acute pain. In addition, it also shows anti-inflammatory and analgesic effects in models of osteoarthritis and rheumatoid arthritis. In vivo, unlike other TRPV1 antagonists whose activity is associated with hyperthermia, this protein has the remarkable feature of dropping core body temperature. This chain is TauPI-stichotoxin-Hcr2d, found in Radianthus crispa (Leathery sea anemone).